The sequence spans 381 residues: Probable tRNA sulfurtransferase (381 aa).

Residues 52–155 (LTNLDALKYV…DASTYIFIDY (104 aa)) enclose the THUMP domain. ATP-binding positions include 173-174 (LM), 198-199 (NF), arginine 255, glycine 277, and glutamine 286.

Belongs to the ThiI family.

It localises to the cytoplasm. It carries out the reaction [ThiI sulfur-carrier protein]-S-sulfanyl-L-cysteine + a uridine in tRNA + 2 reduced [2Fe-2S]-[ferredoxin] + ATP + H(+) = [ThiI sulfur-carrier protein]-L-cysteine + a 4-thiouridine in tRNA + 2 oxidized [2Fe-2S]-[ferredoxin] + AMP + diphosphate. It catalyses the reaction [ThiS sulfur-carrier protein]-C-terminal Gly-Gly-AMP + S-sulfanyl-L-cysteinyl-[cysteine desulfurase] + AH2 = [ThiS sulfur-carrier protein]-C-terminal-Gly-aminoethanethioate + L-cysteinyl-[cysteine desulfurase] + A + AMP + 2 H(+). It participates in cofactor biosynthesis; thiamine diphosphate biosynthesis. Functionally, catalyzes the ATP-dependent transfer of a sulfur to tRNA to produce 4-thiouridine in position 8 of tRNAs, which functions as a near-UV photosensor. Also catalyzes the transfer of sulfur to the sulfur carrier protein ThiS, forming ThiS-thiocarboxylate. This is a step in the synthesis of thiazole, in the thiamine biosynthesis pathway. The sulfur is donated as persulfide by IscS. The sequence is that of Probable tRNA sulfurtransferase from Metamycoplasma arthritidis (strain 158L3-1) (Mycoplasma arthritidis).